Here is a 324-residue protein sequence, read N- to C-terminus: Glutathione synthetase (324 aa).

An ATP-grasp domain is found at 124–309 (KLAIAQFREF…VAGMFIDALE (186 aa)). 150-206 (HAEQGDVIFKPLDGMGGAGIFRVGADGMNLGSVIETLTHNGTRTVMAQQYIPAIRDG) is an ATP binding site. Mg(2+) is bound by residues Glu-280 and Asn-282.

This sequence belongs to the prokaryotic GSH synthase family. The cofactor is Mg(2+). Requires Mn(2+) as cofactor.

It catalyses the reaction gamma-L-glutamyl-L-cysteine + glycine + ATP = glutathione + ADP + phosphate + H(+). It functions in the pathway sulfur metabolism; glutathione biosynthesis; glutathione from L-cysteine and L-glutamate: step 2/2. This is Glutathione synthetase from Ralstonia nicotianae (strain ATCC BAA-1114 / GMI1000) (Ralstonia solanacearum).